We begin with the raw amino-acid sequence, 215 residues long: Adenylate kinase (215 aa).

Residue 10–15 participates in ATP binding; that stretch reads GAGKGT. An NMP region spans residues 30 to 59; the sequence is STGDILRANVREGTELGLAAKEYMDKGELV. AMP is bound by residues threonine 31, arginine 36, 57–59, 85–88, and glutamine 92; these read ELV and GYPR. The segment at 126–162 is LID; that stretch reads GRLMCNCGASYHRTFNPPKKDDVCDICGGKVFQRADD. ATP is bound at residue arginine 127. Positions 130 and 132 each coordinate Zn(2+). Residue 135-136 participates in ATP binding; that stretch reads SY. The Zn(2+) site is built by cysteine 149 and cysteine 152. Arginine 159 and arginine 170 together coordinate AMP. Lysine 198 contacts ATP.

It belongs to the adenylate kinase family. In terms of assembly, monomer.

The protein resides in the cytoplasm. The catalysed reaction is AMP + ATP = 2 ADP. The protein operates within purine metabolism; AMP biosynthesis via salvage pathway; AMP from ADP: step 1/1. In terms of biological role, catalyzes the reversible transfer of the terminal phosphate group between ATP and AMP. Plays an important role in cellular energy homeostasis and in adenine nucleotide metabolism. In Methanosarcina barkeri (strain Fusaro / DSM 804), this protein is Adenylate kinase.